The chain runs to 263 residues: Thiazole synthase (263 aa).

Lys-100 (schiff-base intermediate with DXP) is an active-site residue. 1-deoxy-D-xylulose 5-phosphate contacts are provided by residues Gly-161, 187 to 188, and 209 to 210; these read AG and NT.

Belongs to the ThiG family. As to quaternary structure, homotetramer. Forms heterodimers with either ThiH or ThiS.

Its subcellular location is the cytoplasm. The catalysed reaction is [ThiS sulfur-carrier protein]-C-terminal-Gly-aminoethanethioate + 2-iminoacetate + 1-deoxy-D-xylulose 5-phosphate = [ThiS sulfur-carrier protein]-C-terminal Gly-Gly + 2-[(2R,5Z)-2-carboxy-4-methylthiazol-5(2H)-ylidene]ethyl phosphate + 2 H2O + H(+). The protein operates within cofactor biosynthesis; thiamine diphosphate biosynthesis. Its function is as follows. Catalyzes the rearrangement of 1-deoxy-D-xylulose 5-phosphate (DXP) to produce the thiazole phosphate moiety of thiamine. Sulfur is provided by the thiocarboxylate moiety of the carrier protein ThiS. In vitro, sulfur can be provided by H(2)S. This Shouchella clausii (strain KSM-K16) (Alkalihalobacillus clausii) protein is Thiazole synthase.